The sequence spans 284 residues: Undecaprenyl-diphosphatase 2 (284 aa).

A run of 7 helical transmembrane segments spans residues 6-26 (VIFI…EFIP), 46-66 (FAEM…VVLY), 94-114 (FGMN…LFYD), 119-139 (LFNL…LLVV), 183-203 (IMGG…SFFL), 227-247 (TLWI…IIVM), and 262-282 (FAVY…TNII).

This sequence belongs to the UppP family.

Its subcellular location is the cell membrane. It catalyses the reaction di-trans,octa-cis-undecaprenyl diphosphate + H2O = di-trans,octa-cis-undecaprenyl phosphate + phosphate + H(+). In terms of biological role, catalyzes the dephosphorylation of undecaprenyl diphosphate (UPP). Confers resistance to bacitracin. This is Undecaprenyl-diphosphatase 2 from Clostridioides difficile (strain 630) (Peptoclostridium difficile).